Reading from the N-terminus, the 151-residue chain is Late embryogenesis abundant protein Lea14-A (151 aa).

This sequence belongs to the LEA type 2 family.

This is Late embryogenesis abundant protein Lea14-A (LEA14-A) from Gossypium hirsutum (Upland cotton).